The chain runs to 337 residues: MTGMAKPLALTLGEPAGIGPDIALAAWLKREQHGLPPFYLLGDAGCLSRCAKLLGLDVPLAEVKAEDAAAAFATTLPVVSTGQIATATPGQPDATSAPAAIASIEHAVADVRSGRAAAVVTNPIAKSVLYQAGFHHPGHTEFLAELAKRDGIVPQPVMMLWCPALAVVPVTIHVSLRDAITQLTTDLIVSTARIVVKDLRERLGIAQPRLALAGLNPHAGEDGALGQEDRAVVAPAVAILRREGVDARGPLPADTMFHAAARKTYDCAICMYHDQALIPIKTIAFDEGVNVTLGLPFIRTSPDHGTAFDIAGSGQANPSSLIAALKLAAQMASAKTA.

Positions 139 and 140 each coordinate substrate. Residues H173, H218, and H273 each coordinate a divalent metal cation. K281, N290, and R299 together coordinate substrate.

Belongs to the PdxA family. In terms of assembly, homodimer. Zn(2+) serves as cofactor. Mg(2+) is required as a cofactor. It depends on Co(2+) as a cofactor.

It is found in the cytoplasm. It carries out the reaction 4-(phosphooxy)-L-threonine + NAD(+) = 3-amino-2-oxopropyl phosphate + CO2 + NADH. It participates in cofactor biosynthesis; pyridoxine 5'-phosphate biosynthesis; pyridoxine 5'-phosphate from D-erythrose 4-phosphate: step 4/5. In terms of biological role, catalyzes the NAD(P)-dependent oxidation of 4-(phosphooxy)-L-threonine (HTP) into 2-amino-3-oxo-4-(phosphooxy)butyric acid which spontaneously decarboxylates to form 3-amino-2-oxopropyl phosphate (AHAP). This is 4-hydroxythreonine-4-phosphate dehydrogenase from Rhodopseudomonas palustris (strain ATCC BAA-98 / CGA009).